The following is a 136-amino-acid chain: Ribosome-binding factor A (136 aa).

This sequence belongs to the RbfA family. In terms of assembly, monomer. Binds 30S ribosomal subunits, but not 50S ribosomal subunits or 70S ribosomes.

The protein localises to the cytoplasm. Functionally, one of several proteins that assist in the late maturation steps of the functional core of the 30S ribosomal subunit. Associates with free 30S ribosomal subunits (but not with 30S subunits that are part of 70S ribosomes or polysomes). Required for efficient processing of 16S rRNA. May interact with the 5'-terminal helix region of 16S rRNA. The sequence is that of Ribosome-binding factor A from Rhodopseudomonas palustris (strain BisB5).